Reading from the N-terminus, the 361-residue chain is Glutaminyl-peptide cyclotransferase (361 aa).

The first 28 residues, 1-28 (MAGCRDPRVVDTLHLLLLVAVLPLAVSG), serve as a signal peptide directing secretion. Residue N49 is glycosylated (N-linked (GlcNAc...) asparagine). Cysteines 139 and 164 form a disulfide. Zn(2+) is bound at residue D159. N183 carries N-linked (GlcNAc...) asparagine glycosylation. Catalysis depends on E201, which acts as the Proton acceptor. E202 serves as a coordination point for Zn(2+). D248 serves as the catalytic Proton acceptor. H330 is a binding site for Zn(2+).

This sequence belongs to the glutaminyl-peptide cyclotransferase family. Expressed mainly in brain tissue.

The protein resides in the secreted. It carries out the reaction N-terminal L-glutaminyl-[peptide] = N-terminal 5-oxo-L-prolyl-[peptide] + NH4(+). Functionally, responsible for the biosynthesis of pyroglutamyl peptides. Has a bias against acidic and tryptophan residues adjacent to the N-terminal glutaminyl residue and a lack of importance of chain length after the second residue. Also catalyzes N-terminal pyroglutamate formation. The protein is Glutaminyl-peptide cyclotransferase (QPCT) of Bos taurus (Bovine).